We begin with the raw amino-acid sequence, 207 residues long: NAD(P)H dehydrogenase (quinone) (207 aa).

Positions 3-194 (VQIIFYSMYG…EMAKFQGRHV (192 aa)) constitute a Flavodoxin-like domain. FMN contacts are provided by residues 9–14 (SMYGHI) and 82–84 (TRF). Y11 is an NAD(+) binding site. Substrate is bound at residue W102. FMN-binding positions include 117 to 123 (STATQHG) and H138.

It belongs to the WrbA family. FMN serves as cofactor.

The enzyme catalyses a quinone + NADH + H(+) = a quinol + NAD(+). The catalysed reaction is a quinone + NADPH + H(+) = a quinol + NADP(+). The polypeptide is NAD(P)H dehydrogenase (quinone) (Aromatoleum aromaticum (strain DSM 19018 / LMG 30748 / EbN1) (Azoarcus sp. (strain EbN1))).